The sequence spans 828 residues: DNA gyrase subunit A (828 aa).

The Topo IIA-type catalytic domain occupies 32–497; it reads LPDVRDGLKP…EVLSLEDEDL (466 aa). The active-site O-(5'-phospho-DNA)-tyrosine intermediate is the Tyr-120. Positions 524–530 match the GyrA-box motif; that stretch reads QKRGGRG.

The protein belongs to the type II topoisomerase GyrA/ParC subunit family. Heterotetramer, composed of two GyrA and two GyrB chains. In the heterotetramer, GyrA contains the active site tyrosine that forms a transient covalent intermediate with DNA, while GyrB binds cofactors and catalyzes ATP hydrolysis.

It localises to the cytoplasm. The catalysed reaction is ATP-dependent breakage, passage and rejoining of double-stranded DNA.. A type II topoisomerase that negatively supercoils closed circular double-stranded (ds) DNA in an ATP-dependent manner to modulate DNA topology and maintain chromosomes in an underwound state. Negative supercoiling favors strand separation, and DNA replication, transcription, recombination and repair, all of which involve strand separation. Also able to catalyze the interconversion of other topological isomers of dsDNA rings, including catenanes and knotted rings. Type II topoisomerases break and join 2 DNA strands simultaneously in an ATP-dependent manner. The sequence is that of DNA gyrase subunit A from Streptococcus pyogenes serotype M18 (strain MGAS8232).